Reading from the N-terminus, the 322-residue chain is D-specific alpha-keto acid dehydrogenase (322 aa).

Residues 156–157 (QI), 229–231 (TGR), and aspartate 255 contribute to the NAD(+) site. The active site involves arginine 231. Glutamate 260 is an active-site residue. The active-site Proton donor is histidine 292. 292 to 295 (HTAY) is an NAD(+) binding site.

It belongs to the D-isomer specific 2-hydroxyacid dehydrogenase family.

The catalysed reaction is a (2R)-2-hydroxycarboxylate + NADP(+) = a 2-oxocarboxylate + NADPH + H(+). It catalyses the reaction a (2R)-2-hydroxycarboxylate + NAD(+) = a 2-oxocarboxylate + NADH + H(+). The enzyme catalyses (R)-lactate + NADP(+) = pyruvate + NADPH + H(+). It carries out the reaction (R)-lactate + NAD(+) = pyruvate + NADH + H(+). The catalysed reaction is (2R)-hydroxybutanoate + NADP(+) = 2-oxobutanoate + NADPH + H(+). Its function is as follows. Required for high-level resistance to glycopeptide antibiotics. Catalyzes the reduction of 2-keto acids to 2-D-hydroxy acids, exhibiting highest catalytic efficiency with pyruvate and 2-oxobutanoate/alpha-ketobutyrate as substrates, producing D-lactate and (2R)-hydroxybutanoate, respectively. Together with D-alanine--D-lactate ligase VanA, gives rise to peptidoglycan precursors that terminate in the depsipeptide D-alanine-D-lactate rather than the dipeptide D-alanine-D-alanine thus preventing vancomycin binding. Shows a slight preference for NADPH over NADH as the electron donor. The protein is D-specific alpha-keto acid dehydrogenase of Enterococcus faecium (Streptococcus faecium).